The primary structure comprises 124 residues: Large ribosomal subunit protein bL20 (124 aa).

This sequence belongs to the bacterial ribosomal protein bL20 family.

In terms of biological role, binds directly to 23S ribosomal RNA and is necessary for the in vitro assembly process of the 50S ribosomal subunit. It is not involved in the protein synthesizing functions of that subunit. This is Large ribosomal subunit protein bL20 from Ehrlichia canis (strain Jake).